The primary structure comprises 511 residues: Histidine ammonia-lyase (511 aa).

Residues 142–144 constitute a cross-link (5-imidazolinone (Ala-Gly)); sequence ASG. The residue at position 143 (serine 143) is a 2,3-didehydroalanine (Ser).

The protein belongs to the PAL/histidase family. In terms of processing, contains an active site 4-methylidene-imidazol-5-one (MIO), which is formed autocatalytically by cyclization and dehydration of residues Ala-Ser-Gly.

The protein localises to the cytoplasm. It carries out the reaction L-histidine = trans-urocanate + NH4(+). Its pathway is amino-acid degradation; L-histidine degradation into L-glutamate; N-formimidoyl-L-glutamate from L-histidine: step 1/3. This is Histidine ammonia-lyase from Phenylobacterium zucineum (strain HLK1).